Here is a 2304-residue protein sequence, read N- to C-terminus: Protein Ycf2 (2304 aa).

1637-1644 (GSIGTGRS) lines the ATP pocket.

It belongs to the Ycf2 family.

It is found in the plastid. The protein resides in the chloroplast stroma. Probable ATPase of unknown function. Its presence in a non-photosynthetic plant (Epifagus virginiana) and experiments in tobacco indicate that it has an essential function which is probably not related to photosynthesis. The polypeptide is Protein Ycf2 (Amborella trichopoda).